The chain runs to 294 residues: NAD kinase (294 aa).

Residue aspartate 74 is the Proton acceptor of the active site. NAD(+)-binding positions include aspartate 74 to glycine 75, asparagine 148 to glutamate 149, histidine 159, arginine 176, aspartate 178, threonine 189 to serine 194, and glutamine 249.

This sequence belongs to the NAD kinase family. Requires a divalent metal cation as cofactor.

It localises to the cytoplasm. It carries out the reaction NAD(+) + ATP = ADP + NADP(+) + H(+). Involved in the regulation of the intracellular balance of NAD and NADP, and is a key enzyme in the biosynthesis of NADP. Catalyzes specifically the phosphorylation on 2'-hydroxyl of the adenosine moiety of NAD to yield NADP. The polypeptide is NAD kinase (Vibrio vulnificus (strain CMCP6)).